A 1017-amino-acid polypeptide reads, in one-letter code: Protein HIRA (1017 aa).

WD repeat units follow at residues 11-53 (HNGK…QEDD) and 68-107 (NHLA…GPST). Ser-111 is modified (phosphoserine). WD repeat units lie at residues 129–168 (NHSG…EILA), 172–211 (GHSG…LETS), 220–263 (GGTT…TNMD), 266–322 (GHRK…PLVV), and 326–367 (LFDK…DPLS). The interaction with ASF1A stretch occupies residues 421 to 479 (REMGSATSVAGVVNGESLEDIRKNLLKKQVETRTADGRRRITPLCIAQLDTGDFSTAFF). Residues 421–729 (REMGSATSVA…RLKCNREGKE (309 aa)) form an interaction with CCNA1 region. The required for repression of histone gene transcription stretch occupies residues 439–475 (EDIRKNLLKKQVETRTADGRRRITPLCIAQLDTGDFS). Residues 494 to 509 (SSHSSPQLLPLDSSTP) are compositionally biased toward low complexity. The segment at 494–555 (SSHSSPQLLP…AALSPSVLTT (62 aa)) is disordered. A compositionally biased stretch (polar residues) spans 536–555 (KDSMNATSTPAALSPSVLTT). Ser-549 is modified (phosphoserine). Thr-555 carries the post-translational modification Phosphothreonine; by CDK2. Residue Ser-557 is modified to Phosphoserine. 2 disordered regions span residues 570 to 589 (TERS…TPTA) and 604 to 625 (PRDL…KASS). Position 576 is a phosphothreonine (Thr-576). Ser-584 carries the post-translational modification Phosphoserine. A Phosphothreonine modification is found at Thr-586. The interval 593–826 (LKEQNLVKEL…LAGSDMTVSQ (234 aa)) is interaction with histone H2B. Interaction with PAX3 stretches follow at residues 594–739 (KEQN…SRIL) and 740–828 (TAAG…SQIL). The segment covering 604-619 (PRDLLESSSDSDEKVP) has biased composition (basic and acidic residues). Phosphoserine occurs at positions 610, 611, 612, 614, 661, 675, and 687. Residues 738–1017 (ILTAAGSCDV…QEQLDILRDK (280 aa)) are interaction with histone H4.

The protein belongs to the WD repeat HIR1 family. Interacts with histone H3-3B, PAX3 and PAX7. Interacts with histone H3.Y. Interacts with CCNA1, HIRIP3, NFU1/HIRIP5 and histone H2B. Part of a complex which includes ASF1A, CABIN1, histone H3.3, histone H4 and UBN1. Sumoylated. In terms of processing, phosphorylated by CDK2/CCNA1 and CDK2/CCNE1 on Thr-555 in vitro. Also phosphorylated on Thr-555 and Ser-687 in vivo. Expressed at high levels in kidney, pancreas and skeletal muscle and at lower levels in brain, heart, liver, lung, and placenta.

It is found in the nucleus. Its subcellular location is the PML body. Functionally, cooperates with ASF1A to promote replication-independent chromatin assembly. Required for the periodic repression of histone gene transcription during the cell cycle. Required for the formation of senescence-associated heterochromatin foci (SAHF) and efficient senescence-associated cell cycle exit. The sequence is that of Protein HIRA (HIRA) from Homo sapiens (Human).